Here is a 176-residue protein sequence, read N- to C-terminus: Probable RNA-binding protein EIF1AD (176 aa).

In terms of domain architecture, S1-like spans 5–89 (TKKRYITNKV…VKGEIEYILD (85 aa)). The span at 117 to 128 (AKRGKANDKMID) shows a compositional bias: basic and acidic residues. A disordered region spans residues 117–176 (AKRGKANDKMIDDDMLPPSESEEEDDESEDEIEDTYDEDEETDDEEFDTYNPNRMQAPSK). Positions 129-164 (DDMLPPSESEEEDDESEDEIEDTYDEDEETDDEEFD) are enriched in acidic residues. Over residues 166 to 176 (YNPNRMQAPSK) the composition is skewed to polar residues.

It belongs to the EIF1AD family.

This chain is Probable RNA-binding protein EIF1AD, found in Caenorhabditis briggsae.